A 383-amino-acid chain; its full sequence is 8-amino-7-oxononanoate synthase (383 aa).

Arg-21 contributes to the substrate binding site. Position 108–109 (108–109 (GY)) interacts with pyridoxal 5'-phosphate. A substrate-binding site is contributed by His-133. The pyridoxal 5'-phosphate site is built by Ser-179, His-207, and Thr-233. Lys-236 bears the N6-(pyridoxal phosphate)lysine mark. A substrate-binding site is contributed by Thr-350.

This sequence belongs to the class-II pyridoxal-phosphate-dependent aminotransferase family. BioF subfamily. As to quaternary structure, homodimer. It depends on pyridoxal 5'-phosphate as a cofactor.

The enzyme catalyses 6-carboxyhexanoyl-[ACP] + L-alanine + H(+) = (8S)-8-amino-7-oxononanoate + holo-[ACP] + CO2. It functions in the pathway cofactor biosynthesis; biotin biosynthesis. In terms of biological role, catalyzes the decarboxylative condensation of pimeloyl-[acyl-carrier protein] and L-alanine to produce 8-amino-7-oxononanoate (AON), [acyl-carrier protein], and carbon dioxide. The sequence is that of 8-amino-7-oxononanoate synthase from Yersinia pseudotuberculosis serotype O:1b (strain IP 31758).